A 503-amino-acid chain; its full sequence is ATP synthase subunit alpha, chloroplastic (503 aa).

170 to 177 (GDRQTGKT) serves as a coordination point for ATP.

Belongs to the ATPase alpha/beta chains family. As to quaternary structure, F-type ATPases have 2 components, CF(1) - the catalytic core - and CF(0) - the membrane proton channel. CF(1) has five subunits: alpha(3), beta(3), gamma(1), delta(1), epsilon(1). CF(0) has four main subunits: a, b, b' and c.

It localises to the plastid. The protein localises to the chloroplast thylakoid membrane. The enzyme catalyses ATP + H2O + 4 H(+)(in) = ADP + phosphate + 5 H(+)(out). In terms of biological role, produces ATP from ADP in the presence of a proton gradient across the membrane. The alpha chain is a regulatory subunit. The polypeptide is ATP synthase subunit alpha, chloroplastic (Thalassiosira pseudonana (Marine diatom)).